The primary structure comprises 208 residues: Small ribosomal subunit protein uS4 (208 aa).

The 69-residue stretch at 98 to 166 (SRLDNVVYRM…VKEAIEASRN (69 aa)) folds into the S4 RNA-binding domain.

Belongs to the universal ribosomal protein uS4 family. In terms of assembly, part of the 30S ribosomal subunit. Contacts protein S5. The interaction surface between S4 and S5 is involved in control of translational fidelity.

In terms of biological role, one of the primary rRNA binding proteins, it binds directly to 16S rRNA where it nucleates assembly of the body of the 30S subunit. Functionally, with S5 and S12 plays an important role in translational accuracy. The sequence is that of Small ribosomal subunit protein uS4 from Kosmotoga olearia (strain ATCC BAA-1733 / DSM 21960 / TBF 19.5.1).